The sequence spans 212 residues: Cytidylate kinase (212 aa).

Residue 7-15 (GPAASGKGT) participates in ATP binding.

It belongs to the cytidylate kinase family. Type 1 subfamily.

The protein resides in the cytoplasm. It carries out the reaction CMP + ATP = CDP + ADP. The enzyme catalyses dCMP + ATP = dCDP + ADP. The protein is Cytidylate kinase of Rhodopseudomonas palustris (strain BisB5).